The following is a 716-amino-acid chain: Pyruvate/proton symporter BtsT (716 aa).

At 1–5 (MDTKK) the chain is on the cytoplasmic side. The chain crosses the membrane as a helical span at residues 6-26 (IFKHIPWVILGIIGAFCLAVV). At 27-30 (ALRR) the chain is on the periplasmic side. Residues 31–51 (GEHISALWIVVASVSVYLVAY) traverse the membrane as a helical segment. The Cytoplasmic segment spans residues 52–88 (RYYSLYIAQKVMKLDPTRATPAVINNDGLNYVPTNRY). A helical transmembrane segment spans residues 89–109 (VLFGHHFAAIAGAGPLVGPVL). Residues 110 to 119 (AAQMGYLPGT) are Periplasmic-facing. The helical transmembrane segment at 120 to 140 (LWLLAGVVLAGAVQDFMVLFI) threads the bilayer. The Cytoplasmic portion of the chain corresponds to 141-163 (SSRRNGASLGEMIKEEMGPVPGT). The helical transmembrane segment at 164 to 184 (IALFGCFLIMIIILAVLALIV) threads the bilayer. Topologically, residues 185–191 (VKALAES) are periplasmic. The helical transmembrane segment at 192-212 (PWGVFTVCSTVPIALFMGIYM) threads the bilayer. Residues 213–222 (RFIRPGRVGE) are Cytoplasmic-facing. The helical transmembrane segment at 223–243 (VSVIGIVLLVASIYFGGVIAH) threads the bilayer. Topologically, residues 244–257 (DPYWGPALTFKDTT) are periplasmic. The chain crosses the membrane as a helical span at residues 258-278 (ITFALIGYAFVSALLPVWLIL). The Cytoplasmic portion of the chain corresponds to 279–282 (APRD). The helical transmembrane segment at 283–303 (YLATFLKIGVIVGLALGIVVL) threads the bilayer. At 304–326 (NPELKMPAMTQYIDGTGPLWKGA) the chain is on the periplasmic side. The chain crosses the membrane as a helical span at residues 327 to 347 (LFPFLFITIACGAVSGFHALI). The Cytoplasmic portion of the chain corresponds to 348 to 374 (SSGTTPKLLANETDARFIGYGAMLMES). A helical membrane pass occupies residues 375-395 (FVAIMALVAASIIEPGLYFAM). The Periplasmic segment spans residues 396–484 (NTPPAGLGIT…HVFHKVLPMA (89 aa)). Residues 485 to 505 (DMGFWYHFGILFEALFILTAL) traverse the membrane as a helical segment. At 506 to 531 (DAGTRSGRFMLQDLLGNFIPFLKKTD) the chain is on the cytoplasmic side. A helical transmembrane segment spans residues 532-552 (SLVAGIIGTAGCVGLWGYLLY). The Periplasmic portion of the chain corresponds to 553–568 (QGVVDPLGGVKSLWPL). A helical membrane pass occupies residues 569-589 (FGISNQMLAAVALVLGTVVLI). The Cytoplasmic portion of the chain corresponds to 590–596 (KMKRTQY). The chain crosses the membrane as a helical span at residues 597 to 617 (IWVTVVPAVWLLICTTWALGL). Over 618 to 668 (KLFSTNPQMEGFFYMASQYKEKIANGTDLTAQQIANMNHIVVNNYTNAGLS) the chain is Periplasmic. The helical transmembrane segment at 669–689 (ILFLIVVYSIIFYGFKTWLAV) threads the bilayer. Over 690–716 (RNSDKRTDKETPYVPIPEGGVKISSHH) the chain is Cytoplasmic. Residues 696-716 (TDKETPYVPIPEGGVKISSHH) form a disordered region.

This sequence belongs to the peptide transporter carbon starvation (CstA) (TC 2.A.114) family. As to quaternary structure, interacts with BtsS and YpdA.

The protein localises to the cell inner membrane. It carries out the reaction pyruvate(out) + H(+)(out) = pyruvate(in) + H(+)(in). Its activity is regulated as follows. Transport is inhibited by the protonophores 2,4-dinitrophenol (DNP) and carbonyl cyanide m-chlorophenyl hydrazone (CCCP), but not by ionophores such as valinomycin, nonactin and nigericin. Transports pyruvate with a high affinity and specificity. The process is driven by the proton motive force. Under nutrient limiting conditions, mediates the uptake of pyruvate, thus enabling it to be used as a carbon source for the growth and survival. Part of a nutrient-sensing regulatory network composed of the two-component regulatory systems BtsS/BtsR and YpdA/YpdB, and their respective target proteins, BtsT and YhjX. The sequence is that of Pyruvate/proton symporter BtsT from Escherichia coli (strain K12).